Reading from the N-terminus, the 272-residue chain is Bis(5'-nucleosyl)-tetraphosphatase, symmetrical (272 aa).

Belongs to the Ap4A hydrolase family.

It carries out the reaction P(1),P(4)-bis(5'-adenosyl) tetraphosphate + H2O = 2 ADP + 2 H(+). Functionally, hydrolyzes diadenosine 5',5'''-P1,P4-tetraphosphate to yield ADP. The sequence is that of Bis(5'-nucleosyl)-tetraphosphatase, symmetrical from Glaesserella parasuis serovar 5 (strain SH0165) (Haemophilus parasuis).